An 85-amino-acid chain; its full sequence is Alpha-conotoxin Lt28.1 (85 aa).

An N-terminal signal peptide occupies residues Met1 to Ala21. A propeptide spanning residues Val22–Lys40 is cleaved from the precursor. Intrachain disulfides connect Cys61–Cys74, Cys66–Cys84, Cys67–Cys79, and Cys72–Cys81.

This sequence belongs to the conotoxin D superfamily. In terms of tissue distribution, expressed by the venom duct.

It localises to the secreted. In terms of biological role, alpha-conotoxins act on postsynaptic membranes, they bind to the nicotinic acetylcholine receptors (nAChR) and thus inhibit them. This toxin weakly inhibits alpha-9-alpha-10/CHRNA9-CHRNA10 nAChRs (IC(50)=3 uM). The protein is Alpha-conotoxin Lt28.1 of Conus litteratus (Lettered cone).